Here is a 457-residue protein sequence, read N- to C-terminus: Siroheme synthase (457 aa).

Residues 4-202 are precorrin-2 dehydrogenase /sirohydrochlorin ferrochelatase; sequence LPIFCQLRDR…ANADEKAVNA (199 aa). NAD(+)-binding positions include 22–23 and 43–44; these read DV and LT. The residue at position 128 (Ser128) is a Phosphoserine. The uroporphyrinogen-III C-methyltransferase stretch occupies residues 216-448; it reads GEVVLVGAGP…IIVGRVVALR (233 aa). Pro225 is a binding site for S-adenosyl-L-methionine. Asp248 functions as the Proton acceptor in the catalytic mechanism. Lys270 acts as the Proton donor in catalysis. Residues 301–303, Ile306, 331–332, Met382, Gly411, and Ala437 contribute to the S-adenosyl-L-methionine site; these read GGD and TA.

It in the N-terminal section; belongs to the precorrin-2 dehydrogenase / sirohydrochlorin ferrochelatase family. This sequence in the C-terminal section; belongs to the precorrin methyltransferase family. Homodimer.

It catalyses the reaction uroporphyrinogen III + 2 S-adenosyl-L-methionine = precorrin-2 + 2 S-adenosyl-L-homocysteine + H(+). It carries out the reaction precorrin-2 + NAD(+) = sirohydrochlorin + NADH + 2 H(+). The enzyme catalyses siroheme + 2 H(+) = sirohydrochlorin + Fe(2+). Its pathway is cofactor biosynthesis; adenosylcobalamin biosynthesis; precorrin-2 from uroporphyrinogen III: step 1/1. The protein operates within cofactor biosynthesis; adenosylcobalamin biosynthesis; sirohydrochlorin from precorrin-2: step 1/1. It functions in the pathway porphyrin-containing compound metabolism; siroheme biosynthesis; precorrin-2 from uroporphyrinogen III: step 1/1. It participates in porphyrin-containing compound metabolism; siroheme biosynthesis; siroheme from sirohydrochlorin: step 1/1. Its pathway is porphyrin-containing compound metabolism; siroheme biosynthesis; sirohydrochlorin from precorrin-2: step 1/1. Its function is as follows. Multifunctional enzyme that catalyzes the SAM-dependent methylations of uroporphyrinogen III at position C-2 and C-7 to form precorrin-2 via precorrin-1. Then it catalyzes the NAD-dependent ring dehydrogenation of precorrin-2 to yield sirohydrochlorin. Finally, it catalyzes the ferrochelation of sirohydrochlorin to yield siroheme. The protein is Siroheme synthase of Salmonella typhimurium (strain LT2 / SGSC1412 / ATCC 700720).